Consider the following 101-residue polypeptide: Small ribosomal subunit protein uS14 (101 aa).

This sequence belongs to the universal ribosomal protein uS14 family. As to quaternary structure, part of the 30S ribosomal subunit. Contacts proteins S3 and S10.

Its function is as follows. Binds 16S rRNA, required for the assembly of 30S particles and may also be responsible for determining the conformation of the 16S rRNA at the A site. This is Small ribosomal subunit protein uS14 from Pseudomonas putida (strain GB-1).